The following is a 261-amino-acid chain: MPKHILIFDSGIGGLSVYKEIKYQLPLAKYIYAFDNAAFPYGELTESVLIERTTHIISELCSQFPIDIVVIACNTASTVVLPSLRDKLDIPVVGVVPAIKPAALVSNKIGLLATPATVKRSYTYDLIKSFAPISDVQLLGSTRLVEMAEEKMIGIDVDMRAKRDLSPWQNKVDTIVLGCTHFPFLKNEIKKALGNKILLIDSGEAIARRVKQLLNGDGVESAVLFEGEVFCSAPSIKEEALNHTFKELNFSSLQCLGYPKF.

Substrate-binding positions include 9–10 (DS) and 41–42 (YG). Cys73 (proton donor/acceptor) is an active-site residue. 74 to 75 (NT) is a binding site for substrate. Catalysis depends on Cys179, which acts as the Proton donor/acceptor. 180–181 (TH) is a binding site for substrate.

It belongs to the aspartate/glutamate racemases family.

It carries out the reaction L-glutamate = D-glutamate. It functions in the pathway cell wall biogenesis; peptidoglycan biosynthesis. Functionally, provides the (R)-glutamate required for cell wall biosynthesis. This is Glutamate racemase from Aliivibrio fischeri (strain MJ11) (Vibrio fischeri).